We begin with the raw amino-acid sequence, 104 residues long: Pyrimidine/purine nucleoside phosphorylase (104 aa).

It belongs to the nucleoside phosphorylase PpnP family.

The enzyme catalyses a purine D-ribonucleoside + phosphate = a purine nucleobase + alpha-D-ribose 1-phosphate. It carries out the reaction adenosine + phosphate = alpha-D-ribose 1-phosphate + adenine. The catalysed reaction is cytidine + phosphate = cytosine + alpha-D-ribose 1-phosphate. It catalyses the reaction guanosine + phosphate = alpha-D-ribose 1-phosphate + guanine. The enzyme catalyses inosine + phosphate = alpha-D-ribose 1-phosphate + hypoxanthine. It carries out the reaction thymidine + phosphate = 2-deoxy-alpha-D-ribose 1-phosphate + thymine. The catalysed reaction is uridine + phosphate = alpha-D-ribose 1-phosphate + uracil. It catalyses the reaction xanthosine + phosphate = alpha-D-ribose 1-phosphate + xanthine. In terms of biological role, catalyzes the phosphorolysis of diverse nucleosides, yielding D-ribose 1-phosphate and the respective free bases. Can use uridine, adenosine, guanosine, cytidine, thymidine, inosine and xanthosine as substrates. Also catalyzes the reverse reactions. The sequence is that of Pyrimidine/purine nucleoside phosphorylase from Geotalea daltonii (strain DSM 22248 / JCM 15807 / FRC-32) (Geobacter daltonii).